Reading from the N-terminus, the 156-residue chain is MPRRREVPKREILPDPKFGNVDLSKFMNVIMESGKKAVAERIIYGALETVEKKANRDPLEVFITALNNVKPMVEVKSRRVGGANYQVPVEVRPVRRMALAMRWLKESARKRSEKSMAQRLANELLEASEGRGGAMKKRDEVHRMAEANKAFSHFRF.

Belongs to the universal ribosomal protein uS7 family. In terms of assembly, part of the 30S ribosomal subunit. Contacts proteins S9 and S11.

In terms of biological role, one of the primary rRNA binding proteins, it binds directly to 16S rRNA where it nucleates assembly of the head domain of the 30S subunit. Is located at the subunit interface close to the decoding center, probably blocks exit of the E-site tRNA. This is Small ribosomal subunit protein uS7 from Methylibium petroleiphilum (strain ATCC BAA-1232 / LMG 22953 / PM1).